A 353-amino-acid chain; its full sequence is Alcohol dehydrogenase 1 (353 aa).

The Zn(2+) site is built by C47, H70, C101, C104, C107, C115, and C157. NAD(+) contacts are provided by residues 181–187 (GAGGGLG), D205, K210, 274–276 (IGL), and R346.

Belongs to the zinc-containing alcohol dehydrogenase family. Homotetramer. The cofactor is Zn(2+).

The protein localises to the cytoplasm. The catalysed reaction is a primary alcohol + NAD(+) = an aldehyde + NADH + H(+). It carries out the reaction a secondary alcohol + NAD(+) = a ketone + NADH + H(+). In Neurospora crassa (strain ATCC 24698 / 74-OR23-1A / CBS 708.71 / DSM 1257 / FGSC 987), this protein is Alcohol dehydrogenase 1 (adh-1).